A 166-amino-acid chain; its full sequence is P2Y purinoceptor 2 (166 aa).

Over 1–24 the chain is Cytoplasmic; sequence VHRCLGVLRPLHSLRWGRARYARR. The chain crosses the membrane as a helical span at residues 25-45; it reads VAAVVWVLVLACQAPVLYFVT. Residues 46-72 are Extracellular-facing; sequence TSVRGTRITCHDTSARELFSHFVAYSS. Residues 73-93 form a helical membrane-spanning segment; it reads VMLSLLFAVPFSVILVCYVLM. Over 94–115 the chain is Cytoplasmic; that stretch reads ARRLLKPAYGTTGGLPRAKRKS. Residues 116–136 form a helical membrane-spanning segment; sequence VRTIALVLAVFTLCFLPFHVT. Topologically, residues 137–159 are extracellular; that stretch reads RTLYYSFRSLDLSCHTLNAINMA. A helical transmembrane segment spans residues 160-166; that stretch reads YKITRPL.

This sequence belongs to the G-protein coupled receptor 1 family.

Its subcellular location is the cell membrane. Receptor for ATP and UTP coupled to G-proteins that activate a phosphatidylinositol-calcium second messenger system. This Cricetulus griseus (Chinese hamster) protein is P2Y purinoceptor 2 (P2RY2).